An 85-amino-acid polypeptide reads, in one-letter code: Small ribosomal subunit protein uS17 (85 aa).

The protein belongs to the universal ribosomal protein uS17 family. As to quaternary structure, part of the 30S ribosomal subunit.

In terms of biological role, one of the primary rRNA binding proteins, it binds specifically to the 5'-end of 16S ribosomal RNA. The chain is Small ribosomal subunit protein uS17 from Pseudoalteromonas translucida (strain TAC 125).